The following is a 332-amino-acid chain: Transcription factor ZEB2 (332 aa).

The tract at residues methionine 1 to lysine 37 is disordered. Basic and acidic residues predominate over residues serine 14–lysine 24. In terms of domain architecture, bZIP spans glutamate 17–asparagine 50. Residues glutamate 21 to glutamate 43 are basic motif. Residues leucine 45 to glutamine 52 form a leucine-zipper region. The segment at methionine 106–aspartate 170 is disordered. A compositionally biased stretch (polar residues) spans arginine 111–alanine 134. The segment covering histidine 143 to leucine 155 has biased composition (low complexity). Over residues threonine 160–aspartate 170 the composition is skewed to polar residues.

Belongs to the bZIP family.

The protein localises to the nucleus. Transcription factor that specifically controls transcription of the zearalenone biosynthesis cluster genes. The polypeptide is Transcription factor ZEB2 (Gibberella zeae (strain ATCC MYA-4620 / CBS 123657 / FGSC 9075 / NRRL 31084 / PH-1) (Wheat head blight fungus)).